The chain runs to 457 residues: tRNA modification GTPase MnmE (457 aa).

Residues R22, E86, and R125 each coordinate (6S)-5-formyl-5,6,7,8-tetrahydrofolate. Residues 221-381 (GLRAVLAGRP…LEAEVARVAG (161 aa)) form the TrmE-type G domain. N231 lines the K(+) pocket. GTP-binding positions include 231–236 (NVGKSS), 250–256 (TPIPGTT), and 275–278 (DTAG). S235 lines the Mg(2+) pocket. 3 residues coordinate K(+): T250, I252, and T255. T256 contributes to the Mg(2+) binding site. K457 contributes to the (6S)-5-formyl-5,6,7,8-tetrahydrofolate binding site.

It belongs to the TRAFAC class TrmE-Era-EngA-EngB-Septin-like GTPase superfamily. TrmE GTPase family. As to quaternary structure, homodimer. Heterotetramer of two MnmE and two MnmG subunits. Requires K(+) as cofactor.

It localises to the cytoplasm. Exhibits a very high intrinsic GTPase hydrolysis rate. Involved in the addition of a carboxymethylaminomethyl (cmnm) group at the wobble position (U34) of certain tRNAs, forming tRNA-cmnm(5)s(2)U34. The sequence is that of tRNA modification GTPase MnmE from Symbiobacterium thermophilum (strain DSM 24528 / JCM 14929 / IAM 14863 / T).